The sequence spans 247 residues: Acetate transporter protein patA (247 aa).

Asn20 is a glycosylation site (N-linked (GlcNAc...) asparagine). The next 6 helical transmembrane spans lie at Pro37–Phe57, Ala71–Val91, Val106–Gly126, Ala141–Met161, Ala169–Ala189, and Ala202–Met222.

This sequence belongs to the acetate uptake transporter (AceTr) (TC 2.A.96) family.

The protein resides in the endoplasmic reticulum membrane. It participates in mycotoxin biosynthesis; patulin biosynthesis. Its function is as follows. Acetate transporter protein; part of the gene cluster that mediates the biosynthesis of patulin, an acetate-derived tetraketide mycotoxin produced by several fungal species that shows antimicrobial properties against several bacteria. May be involved in the uptake of acetate, a substrate for the synthesis of 6-methylsalicylic acid by the polyketide synthase patK. This is Acetate transporter protein patA from Aspergillus clavatus (strain ATCC 1007 / CBS 513.65 / DSM 816 / NCTC 3887 / NRRL 1 / QM 1276 / 107).